The sequence spans 476 residues: Proline--tRNA ligase 2 (476 aa).

It belongs to the class-II aminoacyl-tRNA synthetase family. ProS type 3 subfamily. As to quaternary structure, homodimer.

It localises to the cytoplasm. It catalyses the reaction tRNA(Pro) + L-proline + ATP = L-prolyl-tRNA(Pro) + AMP + diphosphate. Functionally, catalyzes the attachment of proline to tRNA(Pro) in a two-step reaction: proline is first activated by ATP to form Pro-AMP and then transferred to the acceptor end of tRNA(Pro). This is Proline--tRNA ligase 2 from Bacillus cereus (strain ATCC 10987 / NRS 248).